A 257-amino-acid chain; its full sequence is Granzyme M (257 aa).

Positions 1-23 (MEACVSSLLVLALGALSVGSSFG) are cleaved as a signal peptide. The propeptide at 24–25 (TQ) is activation peptide. One can recognise a Peptidase S1 domain in the interval 26-254 (IIGGREVIPH…YVSWIRKVTG (229 aa)). An intrachain disulfide couples cysteine 51 to cysteine 67. Catalysis depends on charge relay system residues histidine 66 and aspartate 111. Disulfide bonds link cysteine 145-cysteine 213, cysteine 176-cysteine 192, and cysteine 203-cysteine 230. An N-linked (GlcNAc...) asparagine glycan is attached at asparagine 177. Catalysis depends on serine 207, which acts as the Charge relay system.

It belongs to the peptidase S1 family. Granzyme subfamily. In terms of tissue distribution, highly and constitutively expressed in activated natural killer (NK) cells.

It is found in the secreted. It localises to the cytoplasmic granule. Functionally, cleaves peptide substrates after methionine, leucine, and norleucine. Physiological substrates include EZR, alpha-tubulins and the apoptosis inhibitor BIRC5/Survivin. Promotes caspase activation and subsequent apoptosis of target cells. This chain is Granzyme M (GZMM), found in Homo sapiens (Human).